A 507-amino-acid chain; its full sequence is MPDTDQAASWLASARSSLTDISVGPRTDRTGRVEDIGDGIALISGLPDAKLDELLSFGNGRYGFVHGLEEDSIGCILLNNEGTIEAGDAVQGTSGVVSVPVGPGLLGRVVDPLGRPLDGKGPVEAETWFPVERPAPAIIDRELVTEPVQTGTLAIDTLFPIGRGQRELIVGDRATGKTTIAVDAILAQKSNDMICVYVAIGQKTSSVQRVIETIRTRGNPDRCIIVVARPAEAPGLCWIAPFAAMSMAEYFRDRGQHALLVIDDLSKHAATHREVSLLTGRPPGREAYPGDIFYVHARLLERAAKLSAAKGGGSLTALPVAETEAGNLSAYIPTNLISITDGQIVLNRTLFDQGQKPAVDVGVSVSRVGGAAQSPILRSSVGTLRLDYAQFIELEAFTRFGGLPDTHVRQQLARGACIRATLRQGPHAPLDLLQEVALVTASQNGLLDGVTAKNIRTIQSGLGDYLRSNASEISTAIESGGVLSAEQKERFVACLRQYVEPRASAAS.

An ATP-binding site is contributed by 171–178; sequence GDRATGKT.

Belongs to the ATPase alpha/beta chains family. In terms of assembly, F-type ATPases have 2 components, CF(1) - the catalytic core - and CF(0) - the membrane proton channel. CF(1) has five subunits: alpha(3), beta(3), gamma(1), delta(1), epsilon(1). CF(0) has three main subunits: a(1), b(2) and c(9-12). The alpha and beta chains form an alternating ring which encloses part of the gamma chain. CF(1) is attached to CF(0) by a central stalk formed by the gamma and epsilon chains, while a peripheral stalk is formed by the delta and b chains.

Its subcellular location is the cell inner membrane. The enzyme catalyses ATP + H2O + 4 H(+)(in) = ADP + phosphate + 5 H(+)(out). Its function is as follows. Produces ATP from ADP in the presence of a proton gradient across the membrane. The alpha chain is a regulatory subunit. The polypeptide is ATP synthase subunit alpha 2 (Gluconobacter oxydans (strain 621H) (Gluconobacter suboxydans)).